The sequence spans 577 residues: Arginine--tRNA ligase (577 aa).

Residues 122–132 (PNVAKEMHVGH) carry the 'HIGH' region motif.

This sequence belongs to the class-I aminoacyl-tRNA synthetase family. As to quaternary structure, monomer.

Its subcellular location is the cytoplasm. It carries out the reaction tRNA(Arg) + L-arginine + ATP = L-arginyl-tRNA(Arg) + AMP + diphosphate. This chain is Arginine--tRNA ligase, found in Vibrio campbellii (strain ATCC BAA-1116).